Consider the following 208-residue polypeptide: ATP-dependent Clp protease proteolytic subunit 1 (208 aa).

Catalysis depends on serine 108, which acts as the Nucleophile. The active site involves histidine 133.

This sequence belongs to the peptidase S14 family. Fourteen ClpP subunits assemble into 2 heptameric rings which stack back to back to give a disk-like structure with a central cavity, resembling the structure of eukaryotic proteasomes.

It localises to the cytoplasm. The enzyme catalyses Hydrolysis of proteins to small peptides in the presence of ATP and magnesium. alpha-casein is the usual test substrate. In the absence of ATP, only oligopeptides shorter than five residues are hydrolyzed (such as succinyl-Leu-Tyr-|-NHMec, and Leu-Tyr-Leu-|-Tyr-Trp, in which cleavage of the -Tyr-|-Leu- and -Tyr-|-Trp bonds also occurs).. Cleaves peptides in various proteins in a process that requires ATP hydrolysis. Has a chymotrypsin-like activity. Plays a major role in the degradation of misfolded proteins. This chain is ATP-dependent Clp protease proteolytic subunit 1, found in Corynebacterium efficiens (strain DSM 44549 / YS-314 / AJ 12310 / JCM 11189 / NBRC 100395).